The chain runs to 344 residues: Dihydroorotase (344 aa).

Zn(2+)-binding residues include His-14 and His-16. Substrate-binding positions include 16-18 (HFR) and Asn-42. The Zn(2+) site is built by Lys-100, His-137, and His-175. Lys-100 is modified (N6-carboxylysine). Residue His-137 coordinates substrate. Leu-220 contacts substrate. Asp-248 is a binding site for Zn(2+). Residue Asp-248 is part of the active site. 2 residues coordinate substrate: His-252 and Ala-264.

The protein belongs to the metallo-dependent hydrolases superfamily. DHOase family. Class II DHOase subfamily. As to quaternary structure, homodimer. The cofactor is Zn(2+).

It carries out the reaction (S)-dihydroorotate + H2O = N-carbamoyl-L-aspartate + H(+). It participates in pyrimidine metabolism; UMP biosynthesis via de novo pathway; (S)-dihydroorotate from bicarbonate: step 3/3. Catalyzes the reversible cyclization of carbamoyl aspartate to dihydroorotate. The polypeptide is Dihydroorotase (Alcanivorax borkumensis (strain ATCC 700651 / DSM 11573 / NCIMB 13689 / SK2)).